A 37-amino-acid polypeptide reads, in one-letter code: MVEPLLSGIVLGLIPITLAGLFVTAYLQYRRGDQLDF.

Residues 5–25 (LLSGIVLGLIPITLAGLFVTA) traverse the membrane as a helical segment.

This sequence belongs to the PetG family. In terms of assembly, the 4 large subunits of the cytochrome b6-f complex are cytochrome b6, subunit IV (17 kDa polypeptide, PetD), cytochrome f and the Rieske protein, while the 4 small subunits are PetG, PetL, PetM and PetN. The complex functions as a dimer.

It is found in the plastid. The protein localises to the chloroplast thylakoid membrane. Functionally, component of the cytochrome b6-f complex, which mediates electron transfer between photosystem II (PSII) and photosystem I (PSI), cyclic electron flow around PSI, and state transitions. PetG is required for either the stability or assembly of the cytochrome b6-f complex. In Chaetosphaeridium globosum (Charophycean green alga), this protein is Cytochrome b6-f complex subunit 5.